A 269-amino-acid polypeptide reads, in one-letter code: NAD-capped RNA hydrolase NudC (269 aa).

Arg74 contacts substrate. Cys103, Cys106, Cys121, and Cys124 together coordinate Zn(2+). Residue Tyr129 participates in substrate binding. The Nudix hydrolase domain maps to 130–253 (PRIFPCIIVA…TIARQLIENT (124 aa)). Residues Ala163, Glu179, and Glu183 each contribute to the a divalent metal cation site. The short motif at 164-185 (GFLEVGETLEQCVAREVKEETG) is the Nudix box element. A substrate-binding site is contributed by 197-204 (QPWAFPSS). Glu224 is an a divalent metal cation binding site. A substrate-binding site is contributed by Ala246.

Belongs to the Nudix hydrolase family. NudC subfamily. As to quaternary structure, homodimer. Mg(2+) is required as a cofactor. It depends on Mn(2+) as a cofactor. Zn(2+) serves as cofactor.

It catalyses the reaction a 5'-end NAD(+)-phospho-ribonucleoside in mRNA + H2O = a 5'-end phospho-adenosine-phospho-ribonucleoside in mRNA + beta-nicotinamide D-ribonucleotide + 2 H(+). The enzyme catalyses NAD(+) + H2O = beta-nicotinamide D-ribonucleotide + AMP + 2 H(+). It carries out the reaction NADH + H2O = reduced beta-nicotinamide D-ribonucleotide + AMP + 2 H(+). Its function is as follows. mRNA decapping enzyme that specifically removes the nicotinamide adenine dinucleotide (NAD) cap from a subset of mRNAs by hydrolyzing the diphosphate linkage to produce nicotinamide mononucleotide (NMN) and 5' monophosphate mRNA. The NAD-cap is present at the 5'-end of some mRNAs and stabilizes RNA against 5'-processing. Has preference for mRNAs with a 5'-end purine. Catalyzes the hydrolysis of a broad range of dinucleotide pyrophosphates. This Vibrio atlanticus (strain LGP32) (Vibrio splendidus (strain Mel32)) protein is NAD-capped RNA hydrolase NudC.